The sequence spans 37 residues: MKVRPSVKPICEKCKVIKRKGKVMVICSNPKHKQRQG.

This sequence belongs to the bacterial ribosomal protein bL36 family.

The polypeptide is Large ribosomal subunit protein bL36 (Staphylococcus saprophyticus subsp. saprophyticus (strain ATCC 15305 / DSM 20229 / NCIMB 8711 / NCTC 7292 / S-41)).